We begin with the raw amino-acid sequence, 395 residues long: Nitrite extrusion protein (395 aa).

A run of 12 helical transmembrane segments spans residues 15–35 (SLVA…QITL), 44–64 (ISLV…PLGY), 73–93 (LMFM…SIAD), 96–116 (FDLI…SIGV), 133–153 (GIYG…PVIA), 160–180 (STVQ…VLFG), 203–223 (VLWF…AFTI), 240–262 (AGLR…GFLA), 271–291 (LMFV…SPTI), 293–313 (LYTF…GTVF), 330–350 (IVSA…ASVF), and 357–377 (AIGF…VIWM).

It belongs to the major facilitator superfamily. Nitrate/nitrite porter (TC 2.A.1.8) family.

It localises to the cell membrane. In terms of biological role, involved in excretion of nitrite produced by the dissimilatory reduction of nitrate. The chain is Nitrite extrusion protein (narK) from Bacillus subtilis (strain 168).